The following is a 20-amino-acid chain: Equinatoxin-1 (20 aa).

The plays an important role in the hemolytic activity stretch occupies residues 3 to 12; the sequence is AVAGAVIEGA. The interval 11-20 is N-terminal region; sequence GASLTFNVLQ.

It belongs to the actinoporin family. Sea anemone subfamily. As to quaternary structure, octamer or nonamer in membranes. Monomer in the soluble state.

The protein resides in the secreted. It is found in the nematocyst. Its subcellular location is the target cell membrane. In terms of biological role, pore-forming protein that forms cations-selective hydrophilic pores of around 1 nm and causes cardiac stimulation and cytolysis. Pore formation is a multi-step process that involves specific recognition of membrane sphingomyelin (but neither cholesterol nor phosphatidylcholine) using aromatic rich region and adjacent phosphocholine (POC) binding site, firm binding to the membrane (mainly driven by hydrophobic interactions) accompanied by the transfer of the N-terminal region to the lipid-water interface and finally pore formation after oligomerization of monomers. Cytolytic effects include red blood cells hemolysis, platelet aggregation and lysis, cytotoxic and cytostatic effects on fibroblasts. Lethality in mammals has been ascribed to severe vasospasm of coronary vessels, cardiac arrhythmia, and inotropic effects. This chain is Equinatoxin-1, found in Actinia equina (Beadlet anemone).